The primary structure comprises 245 residues: Eukaryotic translation initiation factor 6 (245 aa).

Belongs to the eIF-6 family. Monomer. Associates with the 60S ribosomal subunit.

Its subcellular location is the cytoplasm. The protein resides in the nucleus. It localises to the nucleolus. Functionally, binds to the 60S ribosomal subunit and prevents its association with the 40S ribosomal subunit to form the 80S initiation complex in the cytoplasm. May also be involved in ribosome biogenesis. This chain is Eukaryotic translation initiation factor 6, found in Drosophila melanogaster (Fruit fly).